The chain runs to 485 residues: Calcium/manganese antiporter SLC30A10 (485 aa).

Residues Met-1–Arg-10 are Cytoplasmic-facing. Residues Leu-11–Leu-31 traverse the membrane as a helical segment. Residues Gly-32–Asp-40 lie on the Extracellular side of the membrane. Residues Ser-41–Ala-61 form a helical membrane-spanning segment. At Arg-62–Gly-81 the chain is on the cytoplasmic side. A helical transmembrane segment spans residues Ala-82–Leu-102. Over Arg-103–Pro-113 the chain is Extracellular. A helical transmembrane segment spans residues Glu-114–Phe-134. The Cytoplasmic portion of the chain corresponds to Gln-135–His-244. Residues Phe-167–Thr-196 form a disordered region. Residues Val-245–Leu-265 traverse the membrane as a helical segment. Residues Pro-266–Tyr-278 lie on the Extracellular side of the membrane. The helical transmembrane segment at Ile-279–Ile-299 threads the bilayer. The Cytoplasmic portion of the chain corresponds to Lys-300–Phe-485. The segment at Gln-308 to Phe-485 is required for plasma membrane localization.

This sequence belongs to the cation diffusion facilitator (CDF) transporter (TC 2.A.4) family. SLC30A subfamily. Forms homodimers. Forms heterodimers and high-molecular weight oligomers with SLC30A3, SLC30A2 and SLC30A4; heterodimerization is mediated by covalent-bound tyrosine residues, occurs probably in a tissue-specific manner and could mediate the intracellular zinc transport activity into early endosomes and recycling endosomes. As to expression, specifically expressed in fetal liver and fetal brain. Expressed in adult tissues with relative levels small intestine &gt; liver &gt; testes &gt; brain &gt; ovary &gt; colon &gt; cervix &gt; prostate &gt; placenta. Expressed in liver and neurons of the nervous system (at protein level).

It localises to the cell membrane. Its subcellular location is the golgi apparatus membrane. It is found in the recycling endosome membrane. The protein resides in the early endosome membrane. It carries out the reaction Mn(2+)(out) + Ca(2+)(in) = Mn(2+)(in) + Ca(2+)(out). The enzyme catalyses Zn(2+)(in) = Zn(2+)(out). Calcium:manganese antiporter of the plasma membrane mediating the efflux of intracellular manganese coupled to an active extracellular calcium exchange. Required for intracellular manganese homeostasis, an essential cation for the function of several enzymes, including some crucially important for the metabolism of neurotransmitters and other neuronal metabolic pathways. Manganese can also be cytotoxic and induce oxidative stress, mitochondrial dysfunction and apoptosis. Could also have an intracellular zinc ion transporter activity, directly regulating intracellular zinc ion homeostasis and more indirectly various signaling pathway and biological processes. The chain is Calcium/manganese antiporter SLC30A10 from Homo sapiens (Human).